A 428-amino-acid chain; its full sequence is 26S proteasome regulatory subunit 6B homolog (428 aa).

At M1 the chain carries N-acetylmethionine. An ATP-binding site is contributed by 213 to 220 (GPPGTGKT). Residue K280 forms a Glycyl lysine isopeptide (Lys-Gly) (interchain with G-Cter in ubiquitin) linkage.

Belongs to the AAA ATPase family. In terms of processing, N-acetylated by NAT3.

The protein resides in the cytoplasm. Its subcellular location is the nucleus. Its function is as follows. The 26S proteasome is involved in the ATP-dependent degradation of ubiquitinated proteins. The regulatory (or ATPase) complex confers ATP dependency and substrate specificity to the 26S complex. This chain is 26S proteasome regulatory subunit 6B homolog (RPT3), found in Saccharomyces cerevisiae (strain ATCC 204508 / S288c) (Baker's yeast).